The primary structure comprises 252 residues: MSDWNPSLYLHFAAERSRPAVELLARVPLENVDYVADLGCGPGNSTALLHQRWPAARITGIDSSPAMIAEARSALPDCQFVEADIRNWQPEQALDLIFANASLQWLPDHYELFPHLVSLLNPQGVLAVQMPDNWLEPTHVLMREVAWEQNYPDRGRESLAGVHAYYDILSEAGCEVDIWRTTYYHQMPSHQAIIDWVTATGLRPWLQDLTESEQQLFLTRYHQMLKEQYPLQENGQILLAFPRLFIVARRTE.

It belongs to the methyltransferase superfamily. Tam family. In terms of assembly, monomer.

It is found in the cytoplasm. The enzyme catalyses trans-aconitate + S-adenosyl-L-methionine = (E)-3-(methoxycarbonyl)pent-2-enedioate + S-adenosyl-L-homocysteine. Catalyzes the S-adenosylmethionine monomethyl esterification of trans-aconitate at high affinity and of cis-aconitate, isocitrate, and citrate at lower velocities and affinities. The chain is Trans-aconitate 2-methyltransferase (tam) from Escherichia coli O157:H7.